A 661-amino-acid polypeptide reads, in one-letter code: Peroxisomal acyl-coenzyme A oxidase 1 (661 aa).

The residue at position 26 (Ser-26) is a Phosphoserine. An N6-acetyllysine modification is found at Lys-65. Lys-89 and Lys-90 each carry N6-succinyllysine. Residue Thr-139 coordinates FAD. N6-succinyllysine is present on Lys-159. Gly-178 lines the FAD pocket. Lys-216 bears the N6-acetyllysine mark. The residue at position 241 (Lys-241) is an N6-succinyllysine. N6-acetyllysine occurs at positions 255, 267, and 272. Residue Lys-349 is modified to N6-succinyllysine. Glu-421 acts as the Proton acceptor in catalysis. N6-acetyllysine; alternate is present on residues Lys-437 and Lys-446. N6-succinyllysine; alternate is present on residues Lys-437 and Lys-446. Lys-500 carries the post-translational modification N6-acetyllysine. Residue Lys-512 is modified to N6-acetyllysine; alternate. The residue at position 512 (Lys-512) is an N6-succinyllysine; alternate. Position 542 is an N6-succinyllysine (Lys-542). Lys-637 carries the N6-acetyllysine; alternate modification. The residue at position 637 (Lys-637) is an N6-succinyllysine; alternate. The residue at position 643 (Lys-643) is an N6-succinyllysine. Ser-649 bears the Phosphoserine mark. Lys-652 bears the N6-acetyllysine mark. Position 655 is an N6-succinyllysine (Lys-655). The Microbody targeting signal signature appears at 659-661 (SKL).

It belongs to the acyl-CoA oxidase family. Homodimer. The enzyme contains three components A, B and C, the latter two being produced from the first by a proteolytic cleavage. Interacts with LONP2. FAD serves as cofactor. As to expression, expressed in Schwann cells. Expressed (at protein level) in liver.

Its subcellular location is the peroxisome. The catalysed reaction is a 2,3-saturated acyl-CoA + O2 = a (2E)-enoyl-CoA + H2O2. It carries out the reaction hexadecanoyl-CoA + O2 = (2E)-hexadecenoyl-CoA + H2O2. It catalyses the reaction dodecanoyl-CoA + O2 = (2E)-dodecenoyl-CoA + H2O2. The enzyme catalyses octanoyl-CoA + O2 = (2E)-octenoyl-CoA + H2O2. The catalysed reaction is decanoyl-CoA + O2 = (2E)-decenoyl-CoA + H2O2. It carries out the reaction tetradecanoyl-CoA + O2 = (2E)-tetradecenoyl-CoA + H2O2. It catalyses the reaction hexadecanedioyl-CoA + O2 = (2E)-hexadecenedioyl-CoA + H2O2. The enzyme catalyses tetracosanoyl-CoA + O2 = (2E)-tetracosenoyl-CoA + H2O2. The catalysed reaction is glutaryl-CoA + O2 = (2E)-glutaconyl-CoA + H2O2. It carries out the reaction hexanoyl-CoA + O2 = (2E)-hexenoyl-CoA + H2O2. It catalyses the reaction octadecanoyl-CoA + O2 = (2E)-octadecenoyl-CoA + H2O2. The enzyme catalyses (5Z,8Z,11Z,14Z,17Z)-eicosapentaenoyl-CoA + O2 = (2E,5Z,8Z,11Z,14Z,17Z)-icosahexaenoyl-CoA + H2O2. The catalysed reaction is (6Z,9Z,12Z,15Z,18Z,21Z)-tetracosahexaenoyl-CoA + O2 = (2E,6Z,9Z,12Z,15Z,18Z,21Z)-tetracosaheptaenoyl-CoA + H2O2. It participates in lipid metabolism; peroxisomal fatty acid beta-oxidation. Its function is as follows. Involved in the initial and rate-limiting step of peroxisomal beta-oxidation of straight-chain saturated and unsaturated very-long-chain fatty acids. Catalyzes the desaturation of fatty acyl-CoAs such as palmitoyl-CoA (hexadecanoyl-CoA) to 2-trans-enoyl-CoAs ((2E)-enoyl-CoAs) such as (2E)-hexadecenoyl-CoA, and donates electrons directly to molecular oxygen (O(2)), thereby producing hydrogen peroxide (H(2)O(2)). Shows highest activity against medium-chain fatty acyl-CoAs. Shows optimum activity with a chain length of 10 carbons (decanoyl-CoA) in vitro. Functionally, is active against a much broader range of substrates and shows activity towards long-chain acyl-CoAs. This chain is Peroxisomal acyl-coenzyme A oxidase 1, found in Rattus norvegicus (Rat).